The primary structure comprises 156 residues: Envelope glycoprotein L (156 aa).

An N-terminal signal peptide occupies residues 1–16 (MSPLVAVLVFFSAALG). An interaction with gH region spans residues 21 to 141 (GVAGNPHGLD…KELGEVAVHK (121 aa)). The region spanning 50–156 (ELEWDDEDHP…LRYNGGPPAE (107 aa)) is the gL alphaherpesvirus-type domain. A disulfide bond links Cys71 and Cys95.

Belongs to the herpesviridae glycoprotein L (gL) family. Alphaherpesvirinae gL subfamily. As to quaternary structure, interacts with glycoprotein H (gH); this interaction is necessary for the correct processing and cell surface expression of gH. The heterodimer gH/gL seems to interact with gB trimers during fusion. O-glycosylated, and sialylated.

The protein localises to the virion membrane. Its subcellular location is the host cell membrane. The protein resides in the host Golgi apparatus. It localises to the host trans-Golgi network. Its function is as follows. The heterodimer glycoprotein H-glycoprotein L is required for the fusion of viral and plasma membranes leading to virus entry into the host cell. Acts as a functional inhibitor of gH and maintains gH in an inhibited form. Upon binding to host integrins, gL dissociates from gH leading to activation of the viral fusion glycoproteins gB and gH. In Sus scrofa (Pig), this protein is Envelope glycoprotein L.